Consider the following 134-residue polypeptide: Large ribosomal subunit protein uL16c (134 aa).

Positions 1-17 (MLSPKRTRFRKQHRGRM) are enriched in basic residues. Residues 1-22 (MLSPKRTRFRKQHRGRMKGISS) form a disordered region.

This sequence belongs to the universal ribosomal protein uL16 family. In terms of assembly, part of the 50S ribosomal subunit.

It localises to the plastid. The protein resides in the chloroplast. This is Large ribosomal subunit protein uL16c from Solanum tuberosum (Potato).